The chain runs to 88 residues: Arminin 1c (88 aa).

The N-terminal stretch at 1–18 (MKPVFVILFLTCIAFTYA) is a signal peptide. The propeptide occupies 19–57 (ESYEDVKEEIKNEVEREIFEDLEEESDVLDSNVREFNDA). The residue at position 85 (Val-85) is a Valine amide.

This sequence belongs to the arminin family. As to expression, expressed in entodermal epithelium along the body column.

The protein localises to the secreted. Its subcellular location is the target cell membrane. Its function is as follows. Antimicrobial peptide with a broad-spectrum antimicrobial activity. Keeps its antibacterial activity under a wide range of salt concentrations that mimic physiological conditions of human blood, which is surprising, since Hydra is an obligate freshwater animal with nearly no salt tolerance. Does not affect red blood cells. The sequence is that of Arminin 1c from Hydra vulgaris (Hydra).